A 343-amino-acid chain; its full sequence is Dimethyladenosine transferase 1, mitochondrial (343 aa).

A mitochondrion-targeting transit peptide spans 1–27 (MAASGKLSTWRLPPLPTIREIIKLLRV). S-adenosyl-L-methionine contacts are provided by leucine 38, glycine 63, glutamate 85, lysine 86, aspartate 111, valine 112, and asparagine 141.

The protein belongs to the class I-like SAM-binding methyltransferase superfamily. rRNA adenine N(6)-methyltransferase family. KsgA subfamily. Interacts with mitochondrial RNA polymerase POLRMT. Interacts with TFAM. Bound to the maturing mtSSU until the late stages of assembly.

Its subcellular location is the mitochondrion. It catalyses the reaction adenosine(N)/adenosine(N+1) in rRNA + 4 S-adenosyl-L-methionine = N(6)-dimethyladenosine(N)/N(6)-dimethyladenosine(N+1) in rRNA + 4 S-adenosyl-L-homocysteine + 4 H(+). In terms of biological role, S-adenosyl-L-methionine-dependent methyltransferase which specifically dimethylates mitochondrial 12S rRNA at the conserved stem loop. Also required for basal transcription of mitochondrial DNA, probably via its interaction with POLRMT and TFAM. Stimulates transcription independently of the methyltransferase activity. Functionally, mitochondrial methyltransferase which uses S-adenosyl methionine to dimethylate two highly conserved adjacent adenosine residues (A1583 and A1584) within the loop of helix 45 at the 3-prime end of 12S rRNA, thereby regulating the assembly or stability of the small subunit of the mitochondrial ribosome. Also required for basal transcription of mitochondrial DNA, probably via its interaction with POLRMT and TFAM. Stimulates transcription independently of the methyltransferase activity. This chain is Dimethyladenosine transferase 1, mitochondrial (TFB1M), found in Pongo abelii (Sumatran orangutan).